Reading from the N-terminus, the 384-residue chain is G protein-coupled receptor 88 (384 aa).

Topologically, residues 1–35 (MTNSSSTSTSTTTGGSLLLLCEEEESWAGRRIPVS) are extracellular. Asparagine 3 carries an N-linked (GlcNAc...) asparagine glycan. Residues 36–56 (LLYSGLAIGGTLANGMVIYLV) traverse the membrane as a helical segment. The Cytoplasmic portion of the chain corresponds to 57 to 73 (SSFRKLQTTSNAFIVNG). Residues 74–94 (CAADLSVCALWMPQEAVLGLL) form a helical membrane-spanning segment. The Extracellular segment spans residues 95 to 116 (PAGSAEPPGDWDSGGGSYRLLR). The chain crosses the membrane as a helical span at residues 117-136 (GGLLGLGLTVSLLSHCLVAL). The Cytoplasmic segment spans residues 137–158 (NRYLLITRAPATYQVLYQRRHT). Residues 159–179 (AGMLALSWALALGLVLLLPPW) traverse the membrane as a helical segment. At 180–195 (APKPGAEPPQVHYPAL) the chain is on the extracellular side. Residues 196–216 (LAAGALLAQTALLLHCYLGIV) traverse the membrane as a helical segment. The Cytoplasmic segment spans residues 217–285 (RRVRVSVKRV…RAQRRLSGLS (69 aa)). The helical transmembrane segment at 286–306 (VLLLCCVFLLATQPLVWVSLA) threads the bilayer. Topologically, residues 307 to 310 (SGFS) are extracellular. A helical membrane pass occupies residues 311 to 331 (LPVPWGVQAASWLLCCALSAL). Over 332 to 384 (NPLLYTWRNEEFRRSVRSVLPGVGDAAAAAAAATAVPAMSQAQLGTRAAGQHW) the chain is Cytoplasmic.

It belongs to the G-protein coupled receptor 1 family. In terms of tissue distribution, expressed predominantly in the striatum. Expressed also in olfactory tubercle, nucleus accumbens, amygdala, and neocortex. Spinal cord, pons, and medulla expression remains discrete. Also expressed in peripheral tissues, including adrenal cortex (16 dpc to 21 dpc) and cochlear ganglia (19 dpc to P3) and also at moderate levels in retina (18 dpc to 19 dpc) and spleen (21 dpc to P7).

The protein localises to the cell membrane. The protein resides in the cell projection. It localises to the cilium membrane. Its subcellular location is the cytoplasm. It is found in the nucleus. In terms of biological role, orphan G protein-coupled receptor implicated in a large repertoire of behavioral responses that engage motor activities, spatial learning, and emotional processing. May play a role in the regulation of cognitive and motor function. Couples with the heterotrimeric G protein complex of the G(i) subfamily, consisting of GNAI1, GNB1 and GNG2, thereby acting through a G(i)-mediated pathway. Plays a role in the attenuation of D1 dopamine receptor (D1R)-mediated cAMP response in ciliated cells. In non-ciliated cells, involved in the inhibition of the beta-2 adrenergic receptor (B2AR) response. This chain is G protein-coupled receptor 88 (Gpr88), found in Rattus norvegicus (Rat).